Here is a 435-residue protein sequence, read N- to C-terminus: Metacaspase-1A (435 aa).

Disordered regions lie at residues 1–46 (MQNH…APPP) and 106–129 (YQNP…VAFG). Pro residues predominate over residues 36-46 (SPQPGYGAPPP). Catalysis depends on residues His-231 and Cys-287.

It belongs to the peptidase C14B family.

In terms of biological role, involved in cell death (apoptosis). This Neosartorya fischeri (strain ATCC 1020 / DSM 3700 / CBS 544.65 / FGSC A1164 / JCM 1740 / NRRL 181 / WB 181) (Aspergillus fischerianus) protein is Metacaspase-1A (casA).